The chain runs to 61 residues: Large ribosomal subunit protein uL30 (61 aa).

Belongs to the universal ribosomal protein uL30 family. As to quaternary structure, part of the 50S ribosomal subunit.

This is Large ribosomal subunit protein uL30 from Bordetella avium (strain 197N).